The chain runs to 366 residues: Lysophosphatidic acid receptor 1-A (366 aa).

At 1–52 (MASLSEFVSEPISMMSQTSAASESQCYYNETIAFFYNRSGKYLATEWNAVSK) the chain is on the extracellular side. 2 cysteine pairs are disulfide-bonded: cysteine 26–cysteine 192 and cysteine 190–cysteine 197. N-linked (GlcNAc...) asparagine glycosylation is found at asparagine 29 and asparagine 37. Lysine 41 is a binding site for a 1-acyl-sn-glycero-3-phosphate. A helical membrane pass occupies residues 53–77 (LVMGLGITVCIFIMLANLLVMVAIY). Over 78 to 85 (VNRRFHFP) the chain is Cytoplasmic. A helical membrane pass occupies residues 86–109 (IYYLMANLAAADFFAGLAYFYLMF). At 110 to 123 (NTGPNTRRLTVSTW) the chain is on the extracellular side. A helical membrane pass occupies residues 124-146 (LLRQGLIDTSLTASVANLLAIAI). Residue 126–131 (RQGLID) coordinates a 1-acyl-sn-glycero-3-phosphate. Residues 147 to 165 (ERHITVFRMQLHTRMSNRR) lie on the Cytoplasmic side of the membrane. The helical transmembrane segment at 166–186 (VVVVIVVIWTVAIVMGAIPSV) threads the bilayer. Over 187–206 (GWNCICDLEQCSNMAPLYSD) the chain is Extracellular. The chain crosses the membrane as a helical span at residues 207-227 (SYLIFWTIFNLVTFVVMVVLY). Tryptophan 212 is a binding site for a 1-acyl-sn-glycero-3-phosphate. The Cytoplasmic segment spans residues 228-257 (AHIFVYVRQKTMRMSRHSSGPRRNRDTMMS). The chain crosses the membrane as a helical span at residues 258–282 (LLKTVVIVLGAFIVCWTPGLVLLLL). Residues 283-296 (DICCPQCNILAYEK) lie on the Extracellular side of the membrane. A disulfide bridge links cysteine 286 with cysteine 289. A helical transmembrane segment spans residues 297-317 (FFLLLAEFNSAMNPIIYSYRD). Topologically, residues 318-366 (KEMSATFKQILCCQRTENVNGPTEGSDRSASSLNHTILAGVHSNDHSVV) are cytoplasmic.

It belongs to the G-protein coupled receptor 1 family. Expressed at high levels in oocytes and at lower levels in brain and spinal cord. Below detection level in lung, heart, kidney, liver, muscle, stomach, and intestine.

It localises to the cell surface. The protein localises to the cell membrane. The protein resides in the endosome. In terms of biological role, receptor for lysophosphatidic acid (LPA). Plays a role in the reorganization of the actin cytoskeleton, cell migration, differentiation and proliferation, and thereby contributes to the responses to tissue damage and infectious agents. Activates downstream signaling cascades via the G(i)/G(o), G(12)/G(13), and G(q) families of heteromeric G proteins. Signaling inhibits adenylyl cyclase activity and decreases cellular cAMP levels. Signaling triggers an increase of cytoplasmic Ca(2+) levels. Signaling leads to the activation of phospholipase C (PLC) and the formation of inositol 1,4,5-trisphosphate. Signaling mediates activation of down-stream MAP kinases. Contributes to the regulation of cell shape. Promotes Rho-dependent reorganization of the actin cytoskeleton in neuronal cells and neurite retraction. Promotes the activation of Rho and the formation of actin stress fibers. Promotes formation of lamellipodia at the leading edge of migrating cells via activation of Rac. Through its function as lysophosphatidic acid receptor, plays a role in chemotaxis and cell migration, including responses to injury and wounding. Promotes cell proliferation in response to lysophosphatidic acid. In Xenopus laevis (African clawed frog), this protein is Lysophosphatidic acid receptor 1-A (lpar1-a).